The sequence spans 64 residues: Prokaryotic ubiquitin-like protein Pup (64 aa).

Residues 1–32 (MNAKQTQIMGGGGRDEDNAEDSAQASGQVQIN) form a disordered region. Residues 20–58 (EDSAQASGQVQINTEGVDSLLDEIDGLLENNAEEFVRSY) form an ARC ATPase binding region. Positions 21 to 32 (DSAQASGQVQIN) are enriched in polar residues. An Isoglutamyl lysine isopeptide (Glu-Lys) (interchain with K-? in acceptor proteins) cross-link involves residue E64.

The protein belongs to the prokaryotic ubiquitin-like protein family. In terms of assembly, strongly interacts with the proteasome-associated ATPase ARC through a hydrophobic interface; the interacting region of Pup lies in its C-terminal half. There is one Pup binding site per ARC hexamer ring.

It participates in protein degradation; proteasomal Pup-dependent pathway. Functionally, protein modifier that is covalently attached to lysine residues of substrate proteins, thereby targeting them for proteasomal degradation. The tagging system is termed pupylation. The sequence is that of Prokaryotic ubiquitin-like protein Pup from Corynebacterium glutamicum (strain R).